The primary structure comprises 394 residues: Ceramide glucosyltransferase (394 aa).

Over 1 to 10 (MALLDLALEG) the chain is Lumenal. The helical transmembrane segment at 11-32 (MAVFGFVLFLVLWLMHFMAIIY) threads the bilayer. Residues 33–195 (TRLHLNKKAT…QVYFGTSHPR (163 aa)) lie on the Cytoplasmic side of the membrane. Residue Asp92 is a short sequence motif, D1. The residue at position 117 (Lys117) is an N6-acetyllysine. Asp144 is a short sequence motif (D2). A helical transmembrane segment spans residues 196–215 (YYISANVTGFKCVTGMSCLM). Residues 216–287 (RKDVLDQAGG…KLRINMLPAT (72 aa)) are Lumenal-facing. A short sequence motif (D3) is located at residue Asp236. The active-site Proton acceptor is the Asp236. A (Q/R)XXRW motif is present at residues 272–276 (RMIRW). Residues 288–304 (IICEPISECFVASLIIG) traverse the membrane as a helical segment. The Cytoplasmic portion of the chain corresponds to 305–309 (WAAHH). Residues 310–328 (VFRWDIMVFFMCHCLAWFI) form a helical membrane-spanning segment. At 329–348 (FDYIQLRGVQGGTLCFSKLD) the chain is on the lumenal side. Residues 349 to 369 (YAVAWFIRESMTIYIFLSALW) traverse the membrane as a helical segment. The Cytoplasmic portion of the chain corresponds to 370 to 394 (DPTISWRTGRYRLRCGGTAEEILDV).

This sequence belongs to the glycosyltransferase 2 family. As to quaternary structure, interacts with RTN1; regulates the ceramide glucosyltransferase activity of UGCG. Found in all tissues examined.

It localises to the golgi apparatus membrane. The enzyme catalyses an N-acylsphing-4-enine + UDP-alpha-D-glucose = a beta-D-glucosyl-(1&lt;-&gt;1')-N-acylsphing-4-enine + UDP + H(+). It carries out the reaction UDP-alpha-D-xylose + an N-acylsphing-4-enine = a beta-D-xylosyl-(1&lt;-&gt;1')-N-acylsphing-4-enine + UDP + H(+). It catalyses the reaction N-(9Z-octadecenoyl)-sphing-4-enine + UDP-alpha-D-xylose = beta-D-xylosyl-(1&lt;-&gt;1')-N-(9Z-octadecenoyl)-sphing-4-enine + UDP + H(+). The protein operates within lipid metabolism; sphingolipid metabolism. In terms of biological role, participates in the initial step of the glucosylceramide-based glycosphingolipid/GSL synthetic pathway at the cytosolic surface of the Golgi. Catalyzes the transfer of glucose from UDP-glucose to ceramide to produce glucosylceramide/GlcCer (such as beta-D-glucosyl-(1&lt;-&gt;1')-N-acylsphing-4-enine). GlcCer is the core component of glycosphingolipids/GSLs, amphipathic molecules consisting of a ceramide lipid moiety embedded in the outer leaflet of the membrane, linked to one of hundreds of different externally oriented oligosaccharide structures. Glycosphingolipids are essential components of membrane microdomains that mediate membrane trafficking and signal transduction, implicated in many fundamental cellular processes, including growth, differentiation, migration, morphogenesis, cell-to-cell and cell-to-matrix interactions. They are required for instance in the proper development and functioning of the nervous system. As an example of their role in signal transduction, they regulate the leptin receptor/LEPR in the leptin-mediated signaling pathway. They also play an important role in the establishment of the skin barrier regulating keratinocyte differentiation and the proper assembly of the cornified envelope. The biosynthesis of GSLs is also required for the proper intestinal endocytic uptake of nutritional lipids. Catalyzes the synthesis of xylosylceramide/XylCer (such as beta-D-xylosyl-(1&lt;-&gt;1')-N-acylsphing-4-enine) using UDP-Xyl as xylose donor. The sequence is that of Ceramide glucosyltransferase from Homo sapiens (Human).